Reading from the N-terminus, the 134-residue chain is Arsenate reductase (134 aa).

Catalysis depends on nucleophile residues Cys-11, Cys-83, and Cys-90. Disulfide bonds link Cys-11–Cys-83 and Cys-83–Cys-90.

Belongs to the low molecular weight phosphotyrosine protein phosphatase family. Thioredoxin-coupled ArsC subfamily.

It localises to the cytoplasm. The catalysed reaction is arsenate + [thioredoxin]-dithiol + H(+) = arsenite + [thioredoxin]-disulfide + H2O. Catalyzes the reduction of arsenate [As(V)] to arsenite [As(III)]. This Bacillus cereus (strain 03BB102) protein is Arsenate reductase.